The following is a 367-amino-acid chain: Phosphoribosylaminoimidazole-succinocarboxamide synthase (367 aa).

It belongs to the SAICAR synthetase family.

The enzyme catalyses 5-amino-1-(5-phospho-D-ribosyl)imidazole-4-carboxylate + L-aspartate + ATP = (2S)-2-[5-amino-1-(5-phospho-beta-D-ribosyl)imidazole-4-carboxamido]succinate + ADP + phosphate + 2 H(+). The protein operates within purine metabolism; IMP biosynthesis via de novo pathway; 5-amino-1-(5-phospho-D-ribosyl)imidazole-4-carboxamide from 5-amino-1-(5-phospho-D-ribosyl)imidazole-4-carboxylate: step 1/2. The polypeptide is Phosphoribosylaminoimidazole-succinocarboxamide synthase (Shewanella sp. (strain MR-4)).